The chain runs to 1235 residues: Cullin-associated NEDD8-dissociated protein 2 (1235 aa).

An N-acetylserine modification is found at S2. HEAT repeat units follow at residues 2–39, 44–81, 83–119, 129–167, 171–208, 210–246, 254–291, 326–367, 371–408, 431–468, 516–553, 564–603, 607–644, 647–684, 689–726, 730–769, 771–812, 856–893, 895–930, 932–965, 966–1002, 1006–1043, 1047–1083, 1104–1140, 1156–1193, and 1203–1235; these read STGAFYISSLLEKMTSSDKDFRFMATSDLMSELQKDSI, DSERKVVRTLLRLLEDRSGEVQNLAVKCLGPLVGKVKE, QVENIVDTLCANMRSDKEQLRDIAGIGLKTVLSELPP, NVCRKITGQLTSAIAQQEDVAVQLEALDILSDMLSRLGA, TFHASLLHCLLPQLSSPRLAVRKRTVVALGHLAAACST, LFVELADHLVDRLPGPRAPASPAAIRTLIQCLGSVGR, AHLDRLVPMVEEFCNLDDDELRESCLQAFEAFLRKCPK, TEDS…SRPD, DFHCTLAPALIRRFKEREENVKADIFGAYIMLLRHTRP, AQVPLVIKALQRQLKDRNVRTRQGCFNLFTELAGVLPG, PHLPTLLPPVMACVADPFYKVAAEALLVLQELVRTLWP, PYVGEMSTATLARLRATDLDQEVKERAISCVGHLVGHLGD, DDLEPTLMLLLDRLRNEITRLPAVKALTLVAMSPLRLD, PILAEALPILASFLRKNQRALRLATLAALDALAQSQGL, PAVRTVLTELPALVSENDMHVAQLAVDFLTTVTQTQPS, EVSGPVLGELLQLLHSPLLPAGVLAATEGFLQALVGTRPP, VEYS…ALSA, GPQRELKTVLLEALGSPSEDVRAAAAYALGRVGAGNLP, FLPFLLAQIEAQPRRQYLLLHALREALGAAQPDNLK, YVEDVWALLFQRCESPEEGTRCVVAECIGKLVFV, NPPYLLPRFRKQLAAGQPYTRSTVITAVKFLISDQPH, PLLKSFIAEFMESLQDPDLNVRRATLTFFNSAVHNKPS, DLLDDILPLLYQETKIRRDLIREVEMGPFKHTVDDGL, LDMCEFLNHVEDGLKDHYDIRMLTFIMLARLATLCPA, TCTAKVKAGSVKQELEKQEELKRSAMRAVAALLTNPEV, and SAQIRSNPELTTLFESIQKDTASGPSTDSMELS. Positions 314 to 345 are disordered; sequence YDHDSDDEEQMETEDSEFSEQESEDEYSDDDD. A compositionally biased stretch (acidic residues) spans 317–345; that stretch reads DSDDEEQMETEDSEFSEQESEDEYSDDDD.

Belongs to the CAND family. Binds TBP, CNOT3 and UBE3C. In terms of processing, ubiquitinated and targeted for proteasomal degradation. Highly expressed in embryonic limb buds.

It localises to the nucleus. Functionally, probable assembly factor of SCF (SKP1-CUL1-F-box protein) E3 ubiquitin ligase complexes that promotes the exchange of the substrate-recognition F-box subunit in SCF complexes, thereby playing a key role in the cellular repertoire of SCF complexes. In Mus musculus (Mouse), this protein is Cullin-associated NEDD8-dissociated protein 2 (Cand2).